Consider the following 616-residue polypeptide: Zinc metalloproteinase nas-36 (616 aa).

The N-terminal stretch at 1–21 (MRRFCRLLFLNSLLSISICKA) is a signal peptide. Positions 22 to 125 (QNPAHLVADE…SKDKTKRLRR (104 aa)) are excised as a propeptide. In terms of domain architecture, Peptidase M12A spans 126–321 (SFVSDKTATW…VATINTAYCK (196 aa)). 9 cysteine pairs are disulfide-bonded: C168–C320, C191–C210, C324–C345, C347–C356, C367–C396, C424–C444, C518–C549, C522–C554, and C534–C539. An N-linked (GlcNAc...) asparagine glycan is attached at N173. H218 provides a ligand contact to Zn(2+). E219 is a catalytic residue. Zn(2+) is bound by residues H222 and H228. Residues 316–357 (NTAYCKEECKSEKTECEYGGYMRPSKCSECLCPDGLGGEKCE) form the EGF-like domain. A CUB domain is found at 367 to 481 (CGGILELSDE…IGFKIQVRST (115 aa)). In terms of domain architecture, TSP type-1 spans 506-555 (PNVWADWGEWSMCSRTCGGCGIRSRVRSCRSKKCEGRRQEFGTCNLKACP).

Zn(2+) serves as cofactor.

It localises to the secreted. Functionally, mtalloprotease. Involved in molting, a process during larval stages in which a new cuticle is formed and the old cuticle is shed. This Caenorhabditis briggsae protein is Zinc metalloproteinase nas-36.